Consider the following 261-residue polypeptide: Mannose-specific lectin 2 (261 aa).

The signal sequence occupies residues 1–23 (MAKLLLFLLPAILGLLIPRSAVA). Bulb-type lectin domains lie at 26–131 (TNYL…PWVP) and 145–252 (DNLL…SKRS). Residues 51-55 (QNDCN), Tyr-59, Trp-63, Gln-64, 170-174 (QGDCN), Tyr-178, and 182-185 (YGWQ) each bind beta-D-mannose. Positions 51–59 (QNDCNLVLY) match the Carbohydrate-binding motif 1 motif. 2 disulfides stabilise this stretch: Cys-54–Cys-74 and Cys-173–Cys-195. A Carbohydrate-binding motif 2 motif is present at residues 170 to 178 (QGDCNLVLY).

In terms of assembly, forms heterotetramer of 2 chains 1 and 2 chains 2 arranged as a dimer of chain 1 and chain 2 heterodimers.

In terms of biological role, mannose-specific lectin. Shows agglutinating activity towards erythrocytes from rabbit. The sequence is that of Mannose-specific lectin 2 from Colocasia esculenta (Wild taro).